The primary structure comprises 496 residues: Glycerol kinase (496 aa).

Residue threonine 12 participates in ADP binding. ATP contacts are provided by threonine 12, threonine 13, and serine 14. Threonine 12 contributes to the sn-glycerol 3-phosphate binding site. Arginine 16 lines the ADP pocket. Arginine 82, glutamate 83, and tyrosine 134 together coordinate sn-glycerol 3-phosphate. The glycerol site is built by arginine 82, glutamate 83, and tyrosine 134. Histidine 230 carries the post-translational modification Phosphohistidine; by HPr. Position 244 (aspartate 244) interacts with sn-glycerol 3-phosphate. Positions 244 and 245 each coordinate glycerol. ADP is bound by residues threonine 266 and glycine 309. ATP contacts are provided by threonine 266, glycine 309, glutamine 313, and glycine 410. Positions 410 and 414 each coordinate ADP.

Belongs to the FGGY kinase family. As to quaternary structure, homotetramer and homodimer (in equilibrium). Post-translationally, the phosphoenolpyruvate-dependent sugar phosphotransferase system (PTS), including enzyme I, and histidine-containing protein (HPr) are required for the phosphorylation, which leads to the activation of the enzyme.

It catalyses the reaction glycerol + ATP = sn-glycerol 3-phosphate + ADP + H(+). The protein operates within polyol metabolism; glycerol degradation via glycerol kinase pathway; sn-glycerol 3-phosphate from glycerol: step 1/1. With respect to regulation, activated by phosphorylation and inhibited by fructose 1,6-bisphosphate (FBP). Functionally, key enzyme in the regulation of glycerol uptake and metabolism. Catalyzes the phosphorylation of glycerol to yield sn-glycerol 3-phosphate. In Bacillus anthracis (strain A0248), this protein is Glycerol kinase.